Consider the following 360-residue polypeptide: MAKSPEVEHPVKAFGWAARDTSGHLSPFHFSRRATGEHDVQFKVLYCGICHSDLHMIKNEWGFTKYPIVPGHEIVGIVTEVGSKVEKFKVGDKVGVGCLVGSCRKCDMCTKDLENYCPGQILTYSATYTDGTTTYGGYSDLMVADEHFVIRWPENLPMDIGAPLLCAGITTYSPLRYFGLDKPGTHVGVVGLGGLGHVAVKFAKAFGAKVTVISTSESKKQEALEKLGADSFLVSRDPEQMKAAAASLDGIIDTVSAIHPIMPLLSILKSHGKLILVGAPEKPLELPSFPLIAGRKIIAGSAIGGLKETQEMIDFAAKHNVLPDVELVSMDYVNTAMERLLKADVKYRFVIDVANTLKSA.

Zn(2+) is bound by residues cysteine 50, histidine 72, cysteine 103, cysteine 106, cysteine 109, cysteine 117, and cysteine 166.

This sequence belongs to the zinc-containing alcohol dehydrogenase family. Zn(2+) is required as a cofactor. Present in seedlings and vascular tissues (at protein level). Restricted to the epidermis.

The enzyme catalyses (6E)-8-hydroxygeraniol + 2 NADP(+) = (6E)-8-oxogeranial + 2 NADPH + 2 H(+). Functionally, dehydrogenase involved in the biosynthesis of oxogeranial from hydroxygeraniol, a precursor of the terpenoid indole alkaloids such as vinblastine and vincristine. This chain is 8-hydroxygeraniol dehydrogenase (10HGO), found in Catharanthus roseus (Madagascar periwinkle).